We begin with the raw amino-acid sequence, 218 residues long: Guanylate kinase (218 aa).

Positions 15-194 (GMMLVLSSPS…SIADVRAILR (180 aa)) constitute a Guanylate kinase-like domain. ATP is bound at residue 22 to 29 (SPSGAGKT).

This sequence belongs to the guanylate kinase family.

It is found in the cytoplasm. It catalyses the reaction GMP + ATP = GDP + ADP. Essential for recycling GMP and indirectly, cGMP. The protein is Guanylate kinase of Rhodospirillum rubrum (strain ATCC 11170 / ATH 1.1.1 / DSM 467 / LMG 4362 / NCIMB 8255 / S1).